A 203-amino-acid polypeptide reads, in one-letter code: Glycerol-3-phosphate acyltransferase (203 aa).

5 helical membrane passes run 2-22 (LATLMFILAYLLGSISSAILV), 54-74 (CLVLIFDVLKGTIPVWGAYFL), 80-100 (ALGLVAVAACLGHMFPLFFGF), 114-134 (LPIGLSLAGLLICTWFIMVAI), and 153-173 (TWLIKPLYTLPVTFITVLIIF).

This sequence belongs to the PlsY family. As to quaternary structure, probably interacts with PlsX.

Its subcellular location is the cell inner membrane. It carries out the reaction an acyl phosphate + sn-glycerol 3-phosphate = a 1-acyl-sn-glycero-3-phosphate + phosphate. The protein operates within lipid metabolism; phospholipid metabolism. In terms of biological role, catalyzes the transfer of an acyl group from acyl-phosphate (acyl-PO(4)) to glycerol-3-phosphate (G3P) to form lysophosphatidic acid (LPA). This enzyme utilizes acyl-phosphate as fatty acyl donor, but not acyl-CoA or acyl-ACP. The chain is Glycerol-3-phosphate acyltransferase from Pseudoalteromonas translucida (strain TAC 125).